A 254-amino-acid polypeptide reads, in one-letter code: MSPNIRPFIAGNWKMNGTVESLGELRAIAAGVSSDLGHLFEALICVPATLLSRASDALSGENLLLGGQNCHFDDCGPYTGDISAFMLKEAGASHVIIGHSERRTVYQESDAIVCAKVQAAWRAGLVALICVGETLEERTSNKVFNVLTRQLEGSLPDGATAENVIIAYEPVWAIGTGNSPTSAVVAEVHDFIRHKMCSRFGDDGRKMRLLYGGSVKPSNAFELLSTVHVNGALIGGASLKAIDFLTICDVYRKL.

12–14 (NWK) provides a ligand contact to substrate. The active-site Electrophile is the histidine 99. Glutamate 169 (proton acceptor) is an active-site residue. Residues glycine 175, serine 214, and 235 to 236 (GG) each bind substrate.

It belongs to the triosephosphate isomerase family. Homodimer.

It localises to the cytoplasm. The catalysed reaction is D-glyceraldehyde 3-phosphate = dihydroxyacetone phosphate. It participates in carbohydrate biosynthesis; gluconeogenesis. It functions in the pathway carbohydrate degradation; glycolysis; D-glyceraldehyde 3-phosphate from glycerone phosphate: step 1/1. Functionally, involved in the gluconeogenesis. Catalyzes stereospecifically the conversion of dihydroxyacetone phosphate (DHAP) to D-glyceraldehyde-3-phosphate (G3P). The chain is Triosephosphate isomerase from Bartonella quintana (strain Toulouse) (Rochalimaea quintana).